Reading from the N-terminus, the 383-residue chain is Proton extrusion protein PxcA (383 aa).

A run of 4 helical transmembrane segments spans residues Ile-163–Ile-183, Ala-258–Ala-278, Ile-306–Leu-326, and Phe-341–Ile-361.

The protein belongs to the CemA family.

The protein localises to the cell inner membrane. Required for H(+) efflux immediately after light irradiation to form a rapid H(+) concentration gradient across the thylakoid membranes. Together with PxcL, contributes to transient H(+) uptake following dark to light transition. The protein is Proton extrusion protein PxcA of Synechococcus sp. (strain CC9902).